Reading from the N-terminus, the 531-residue chain is Peptide chain release factor 3 (531 aa).

The region spanning 13-282 (AKRRTFAIIS…TLIKYAPPPK (270 aa)) is the tr-type G domain. Residues 22–29 (SHPDAGKT), 90–94 (DTPGH), and 144–147 (NKLD) contribute to the GTP site.

The protein belongs to the TRAFAC class translation factor GTPase superfamily. Classic translation factor GTPase family. PrfC subfamily.

The protein resides in the cytoplasm. Increases the formation of ribosomal termination complexes and stimulates activities of RF-1 and RF-2. It binds guanine nucleotides and has strong preference for UGA stop codons. It may interact directly with the ribosome. The stimulation of RF-1 and RF-2 is significantly reduced by GTP and GDP, but not by GMP. This chain is Peptide chain release factor 3, found in Psychrobacter cryohalolentis (strain ATCC BAA-1226 / DSM 17306 / VKM B-2378 / K5).